A 38-amino-acid polypeptide reads, in one-letter code: Photosystem II reaction center protein L (38 aa).

The helical transmembrane segment at 17–37 threads the bilayer; sequence SLFWGLLLIFVLAILFSSYIF.

This sequence belongs to the PsbL family. In terms of assembly, PSII is composed of 1 copy each of membrane proteins PsbA, PsbB, PsbC, PsbD, PsbE, PsbF, PsbH, PsbI, PsbJ, PsbK, PsbL, PsbM, PsbT, PsbX, PsbY, PsbZ, Psb30/Ycf12, at least 3 peripheral proteins of the oxygen-evolving complex and a large number of cofactors. It forms dimeric complexes.

It is found in the plastid. It localises to the cyanelle thylakoid membrane. One of the components of the core complex of photosystem II (PSII). PSII is a light-driven water:plastoquinone oxidoreductase that uses light energy to abstract electrons from H(2)O, generating O(2) and a proton gradient subsequently used for ATP formation. It consists of a core antenna complex that captures photons, and an electron transfer chain that converts photonic excitation into a charge separation. This subunit is found at the monomer-monomer interface and is required for correct PSII assembly and/or dimerization. In Cyanophora paradoxa, this protein is Photosystem II reaction center protein L.